A 61-amino-acid polypeptide reads, in one-letter code: Photosystem II reaction center protein K (61 aa).

Residues 1–24 (MLNIFSLICICLNSVLYSSSFFVA) constitute a propeptide that is removed on maturation. A helical transmembrane segment spans residues 40–60 (MPVIPVLFFLLAFVWQAAVSF).

The protein belongs to the PsbK family. As to quaternary structure, PSII is composed of 1 copy each of membrane proteins PsbA, PsbB, PsbC, PsbD, PsbE, PsbF, PsbH, PsbI, PsbJ, PsbK, PsbL, PsbM, PsbT, PsbX, PsbY, PsbZ, Psb30/Ycf12, at least 3 peripheral proteins of the oxygen-evolving complex and a large number of cofactors. It forms dimeric complexes.

It is found in the plastid. Its subcellular location is the chloroplast thylakoid membrane. Functionally, one of the components of the core complex of photosystem II (PSII). PSII is a light-driven water:plastoquinone oxidoreductase that uses light energy to abstract electrons from H(2)O, generating O(2) and a proton gradient subsequently used for ATP formation. It consists of a core antenna complex that captures photons, and an electron transfer chain that converts photonic excitation into a charge separation. This is Photosystem II reaction center protein K from Morus indica (Mulberry).